We begin with the raw amino-acid sequence, 325 residues long: Tetraacyldisaccharide 4'-kinase (325 aa).

54-61 (SVGGTGKT) is a binding site for ATP.

Belongs to the LpxK family.

It catalyses the reaction a lipid A disaccharide + ATP = a lipid IVA + ADP + H(+). The protein operates within glycolipid biosynthesis; lipid IV(A) biosynthesis; lipid IV(A) from (3R)-3-hydroxytetradecanoyl-[acyl-carrier-protein] and UDP-N-acetyl-alpha-D-glucosamine: step 6/6. Transfers the gamma-phosphate of ATP to the 4'-position of a tetraacyldisaccharide 1-phosphate intermediate (termed DS-1-P) to form tetraacyldisaccharide 1,4'-bis-phosphate (lipid IVA). In Rickettsia felis (strain ATCC VR-1525 / URRWXCal2) (Rickettsia azadi), this protein is Tetraacyldisaccharide 4'-kinase.